The primary structure comprises 359 residues: Histamine H2 receptor (359 aa).

Topologically, residues 1–22 (MISNGTGSSFCLDSPPCRITVS) are extracellular. Asparagine 4 is a glycosylation site (N-linked (GlcNAc...) asparagine). A helical transmembrane segment spans residues 23–44 (VVLTVLILITIAGNVVVCLAVG). At 45–57 (LNRRLRSLTNCFI) the chain is on the cytoplasmic side. The helical transmembrane segment at 58 to 81 (VSLAITDLLLGLLVLPFSAFYQLS) threads the bilayer. Topologically, residues 82-92 (CRWSFGKVFCN) are extracellular. Cysteine 91 and cysteine 174 are disulfide-bonded. Residues 93 to 114 (IYTSLDVMLCTASILNLFMISL) traverse the membrane as a helical segment. Residues 115–134 (DRYCAVTDPLRYPVLITPVR) lie on the Cytoplasmic side of the membrane. Residues 135 to 159 (VAVSLVLIWVISITLSFLSIHLGWN) form a helical membrane-spanning segment. The Extracellular segment spans residues 160-180 (SRNETSSFNHTIPKCKVQVNL). The helical transmembrane segment at 181-204 (VYGLVDGLVTFYLPLLVMCITYYR) threads the bilayer. The Cytoplasmic portion of the chain corresponds to 205-234 (IFKIARDQAKRIHHMGSWKAATIGEHKATV). A helical transmembrane segment spans residues 235–258 (TLAAVMGAFIICWFPYFTVFVYRG). At 259–267 (LKGDDAINE) the chain is on the extracellular side. Residues 268–289 (AFEAVVLWLGYANSALNPILYA) traverse the membrane as a helical segment. Residues 290-359 (TLNRDFRTAY…VTAPRGATDR (70 aa)) lie on the Cytoplasmic side of the membrane. Cysteine 305 carries the S-palmitoyl cysteine lipid modification. Polar residues predominate over residues 310-327 (HNAQETSLRSNSSQLARN). The disordered stretch occupies residues 310–359 (HNAQETSLRSNSSQLARNQSREPMRQEEKPLKLQVWSGTEVTAPRGATDR). Residues 328 to 340 (QSREPMRQEEKPL) are compositionally biased toward basic and acidic residues.

It belongs to the G-protein coupled receptor 1 family. Gastric fundus and, to a lesser extent, in brain.

It localises to the cell membrane. Its function is as follows. The H2 subclass of histamine receptors mediates gastric acid secretion. The activity of this receptor is mediated by G proteins which activate adenylyl cyclase. In Canis lupus familiaris (Dog), this protein is Histamine H2 receptor (HRH2).